The sequence spans 41 residues: Large ribosomal subunit protein bL36 (41 aa).

It belongs to the bacterial ribosomal protein bL36 family.

This chain is Large ribosomal subunit protein bL36, found in Methylocella silvestris (strain DSM 15510 / CIP 108128 / LMG 27833 / NCIMB 13906 / BL2).